The primary structure comprises 612 residues: Dihydroxy-acid dehydratase (612 aa).

D81 contributes to the Mg(2+) binding site. C122 is a [2Fe-2S] cluster binding site. 2 residues coordinate Mg(2+): D123 and K124. Residue K124 is modified to N6-carboxylysine. Residue C195 participates in [2Fe-2S] cluster binding. E491 lines the Mg(2+) pocket. The Proton acceptor role is filled by S517.

Belongs to the IlvD/Edd family. As to quaternary structure, homodimer. [2Fe-2S] cluster is required as a cofactor. The cofactor is Mg(2+).

The catalysed reaction is (2R)-2,3-dihydroxy-3-methylbutanoate = 3-methyl-2-oxobutanoate + H2O. It carries out the reaction (2R,3R)-2,3-dihydroxy-3-methylpentanoate = (S)-3-methyl-2-oxopentanoate + H2O. Its pathway is amino-acid biosynthesis; L-isoleucine biosynthesis; L-isoleucine from 2-oxobutanoate: step 3/4. It functions in the pathway amino-acid biosynthesis; L-valine biosynthesis; L-valine from pyruvate: step 3/4. In terms of biological role, functions in the biosynthesis of branched-chain amino acids. Catalyzes the dehydration of (2R,3R)-2,3-dihydroxy-3-methylpentanoate (2,3-dihydroxy-3-methylvalerate) into 2-oxo-3-methylpentanoate (2-oxo-3-methylvalerate) and of (2R)-2,3-dihydroxy-3-methylbutanoate (2,3-dihydroxyisovalerate) into 2-oxo-3-methylbutanoate (2-oxoisovalerate), the penultimate precursor to L-isoleucine and L-valine, respectively. The polypeptide is Dihydroxy-acid dehydratase (Sinorhizobium medicae (strain WSM419) (Ensifer medicae)).